The sequence spans 450 residues: MPRRYYITTFGCQMNKADSERMAGILEAMGLELAAEPDEADVLLYNTCTIRDNAEQKLYSYLGRQAKRKHQDPNLTLIVAGCVAQQEGEQLLRRVPEVDLVMGPQYANRLGELLEQVWNGSQVVATEPLQIVEDITKPRRDSTVTAWVNVIYGCNERCTYCVVPGVRGQEQSRRPEAIRAEIEELAAQGYKEVTLLGQNIDAYGRDLPGITPEGRRQHTFTDLLYYIHDVAGIERIRFATSHPRYFTERLIRACAELPKVCKHFHIPFQSGDNEILKAMARGYTRERYLHIIETIRRYMPDAAISADAIVGFPGETEEQFQRTLDLVAAVGFDQLNTAAYSPRPNTPAATWENQVPEAIKEDRLQRLNHLVAKIAGDRSQRYLGREEVVLVEGVNPKDAQQVYGRTDGNRLTYLPGDIETLRGQLVRVRITEARAFSLSGVPLAASSLVC.

The MTTase N-terminal domain maps to 3 to 119; the sequence is RRYYITTFGC…LGELLEQVWN (117 aa). Positions 12, 48, 82, 154, 158, and 161 each coordinate [4Fe-4S] cluster. Residues 140 to 377 form the Radical SAM core domain; that stretch reads RDSTVTAWVN…NHLVAKIAGD (238 aa). The region spanning 380–444 is the TRAM domain; that stretch reads QRYLGREEVV…AFSLSGVPLA (65 aa).

Belongs to the methylthiotransferase family. MiaB subfamily. Monomer. [4Fe-4S] cluster serves as cofactor.

Its subcellular location is the cytoplasm. It catalyses the reaction N(6)-dimethylallyladenosine(37) in tRNA + (sulfur carrier)-SH + AH2 + 2 S-adenosyl-L-methionine = 2-methylsulfanyl-N(6)-dimethylallyladenosine(37) in tRNA + (sulfur carrier)-H + 5'-deoxyadenosine + L-methionine + A + S-adenosyl-L-homocysteine + 2 H(+). Functionally, catalyzes the methylthiolation of N6-(dimethylallyl)adenosine (i(6)A), leading to the formation of 2-methylthio-N6-(dimethylallyl)adenosine (ms(2)i(6)A) at position 37 in tRNAs that read codons beginning with uridine. In Thermosynechococcus vestitus (strain NIES-2133 / IAM M-273 / BP-1), this protein is tRNA-2-methylthio-N(6)-dimethylallyladenosine synthase.